The chain runs to 454 residues: Signal recognition particle protein (454 aa).

Residues 102–109 (GLQGTGKT), 184–188 (DTAGR), and 242–245 (TKMD) each bind GTP.

It belongs to the GTP-binding SRP family. SRP54 subfamily. In terms of assembly, part of the signal recognition particle protein translocation system, which is composed of SRP and FtsY.

It localises to the cytoplasm. The catalysed reaction is GTP + H2O = GDP + phosphate + H(+). Its function is as follows. Involved in targeting and insertion of nascent membrane proteins into the cytoplasmic membrane. Binds to the hydrophobic signal sequence of the ribosome-nascent chain (RNC) as it emerges from the ribosomes. The SRP-RNC complex is then targeted to the cytoplasmic membrane where it interacts with the SRP receptor FtsY. In Aquifex aeolicus (strain VF5), this protein is Signal recognition particle protein.